The chain runs to 314 residues: MFIRPPAVFLMGPTASGKTELALALAERLSCEIISVDSAQVYCGMDIGTAKPSLALRHRYPHHLIDILDPAETYSAGRFRADALTLMKAISKRGRIPLLVGGTMLYFHALTYGISPLPPADPEVRAAIDREANMKGWKALHRRLAELDPMAAQRIHHHDPQRIQRALEVFQLTGRPLSELIANSRESELPYRVIKLILAPAERIVLHSRIERRFRAMLKAGFLEEVKGLFMRPDLSLGHSSIRAVGYRQAWLYLQDQFSFPTMAEQAISATRQMAKRQLTWLRRESNAIHVDPEEKDHVEQAWRQLEMALVQAS.

12-19 is an ATP binding site; sequence GPTASGKT. A substrate-binding site is contributed by 14–19; that stretch reads TASGKT. 2 interaction with substrate tRNA regions span residues 37 to 40 and 161 to 165; these read DSAQ and QRIQR.

Belongs to the IPP transferase family. Monomer. The cofactor is Mg(2+).

The catalysed reaction is adenosine(37) in tRNA + dimethylallyl diphosphate = N(6)-dimethylallyladenosine(37) in tRNA + diphosphate. In terms of biological role, catalyzes the transfer of a dimethylallyl group onto the adenine at position 37 in tRNAs that read codons beginning with uridine, leading to the formation of N6-(dimethylallyl)adenosine (i(6)A). This is tRNA dimethylallyltransferase from Nitrosococcus oceani (strain ATCC 19707 / BCRC 17464 / JCM 30415 / NCIMB 11848 / C-107).